We begin with the raw amino-acid sequence, 86 residues long: Omega-theraphotoxin-Hhn1f 2 (86 aa).

Residues 1–21 form the signal peptide; it reads MKSIVFVALFGLALLAVVCSA. A propeptide spanning residues 22–50 is cleaved from the precursor; sequence SEDAHKELLKEVVRAVVVDKTDAVQAEER. 3 disulfide bridges follow: C52–C66, C59–C71, and C65–C78.

Belongs to the neurotoxin 10 (Hwtx-1) family. 17 (Hntx-9) subfamily. In terms of tissue distribution, expressed by the venom gland.

It is found in the secreted. Functionally, ion channel inhibitor. The protein is Omega-theraphotoxin-Hhn1f 2 of Cyriopagopus hainanus (Chinese bird spider).